The primary structure comprises 37 residues: Potassium channel toxin alpha-KTx 4.8 (37 aa).

Intrachain disulfides connect cysteine 13/cysteine 33 and cysteine 17/cysteine 35.

The protein belongs to the short scorpion toxin superfamily. Potassium channel inhibitor family. Alpha-KTx 04 subfamily. Expressed by the venom gland.

Its subcellular location is the secreted. Functionally, reversible blocker of voltage-gated potassium channel Kv1.2/KCNA2 (Kd=65 nM) and calcium-activated potassium channels KCa2.2/KCNN2 (Kd=575 nM) and KCa3.1/KCNN4 (Kd=59 nM). The sequence is that of Potassium channel toxin alpha-KTx 4.8 from Centruroides margaritatus (Central American bark Scorpion).